The sequence spans 227 residues: MTQERSPSDGTPLIQPADIADIRREYTRGGLRRGDLPANPLDLFERWLKQACEAKLADPTAMSVATVDERGQPYQRIVLLKHYDEKGMVFYTNMGSRKAHHLENNPRISLLFPWHVLERQVMVLGRVEKLPALEVLKYFHSRPKDSQIGAWVSKQSSRISARGVLESKFLELKQKFQNGEVPLPSFWGGFRVVIDSVEFWQGGEHRLHDRFFYQRQEENWQIDRLAP.

Substrate contacts are provided by residues 23–26 and Lys-81; that span reads RREY. FMN contacts are provided by residues 76–81, 91–92, Arg-97, Lys-98, and Gln-120; these read RIVLLK and YT. Substrate is bound by residues Tyr-138, Arg-142, and Ser-146. FMN contacts are provided by residues 155–156 and Trp-200; that span reads QS. Residue 206 to 208 participates in substrate binding; it reads RLH. Arg-210 lines the FMN pocket.

It belongs to the pyridoxamine 5'-phosphate oxidase family. As to quaternary structure, homodimer. FMN is required as a cofactor.

The enzyme catalyses pyridoxamine 5'-phosphate + O2 + H2O = pyridoxal 5'-phosphate + H2O2 + NH4(+). It catalyses the reaction pyridoxine 5'-phosphate + O2 = pyridoxal 5'-phosphate + H2O2. Its pathway is cofactor metabolism; pyridoxal 5'-phosphate salvage; pyridoxal 5'-phosphate from pyridoxamine 5'-phosphate: step 1/1. It participates in cofactor metabolism; pyridoxal 5'-phosphate salvage; pyridoxal 5'-phosphate from pyridoxine 5'-phosphate: step 1/1. Catalyzes the oxidation of either pyridoxine 5'-phosphate (PNP) or pyridoxamine 5'-phosphate (PMP) into pyridoxal 5'-phosphate (PLP). The protein is Pyridoxine/pyridoxamine 5'-phosphate oxidase of Pectobacterium atrosepticum (strain SCRI 1043 / ATCC BAA-672) (Erwinia carotovora subsp. atroseptica).